A 150-amino-acid polypeptide reads, in one-letter code: D-aminoacyl-tRNA deacylase (150 aa).

The Gly-cisPro motif, important for rejection of L-amino acids motif lies at 138 to 139 (GP).

It belongs to the DTD family. In terms of assembly, homodimer.

The protein localises to the cytoplasm. It catalyses the reaction glycyl-tRNA(Ala) + H2O = tRNA(Ala) + glycine + H(+). It carries out the reaction a D-aminoacyl-tRNA + H2O = a tRNA + a D-alpha-amino acid + H(+). Its function is as follows. An aminoacyl-tRNA editing enzyme that deacylates mischarged D-aminoacyl-tRNAs. Also deacylates mischarged glycyl-tRNA(Ala), protecting cells against glycine mischarging by AlaRS. Acts via tRNA-based rather than protein-based catalysis; rejects L-amino acids rather than detecting D-amino acids in the active site. By recycling D-aminoacyl-tRNA to D-amino acids and free tRNA molecules, this enzyme counteracts the toxicity associated with the formation of D-aminoacyl-tRNA entities in vivo and helps enforce protein L-homochirality. The sequence is that of D-aminoacyl-tRNA deacylase from Opitutus terrae (strain DSM 11246 / JCM 15787 / PB90-1).